The primary structure comprises 607 residues: Developmental gene 1062 protein (607 aa).

Disordered stretches follow at residues 62–84 (LQGQQQQQQQQQQNHSQQQHNNQ), 334–451 (ICDD…SNFQ), and 568–602 (DNNTQSQMNNSISVNNHHHHHHHQPNNSNLTNDLL). The span at 334–363 (ICDDSSNSSTPSLSSYSNGNNKYNNNNNDS) shows a compositional bias: low complexity. The segment covering 364 to 382 (SESDESDDDDNNDDDDNDS) has biased composition (acidic residues). Low complexity-rich tracts occupy residues 383 to 451 (IDFN…SNFQ) and 568 to 582 (DNNTQSQMNNSISVN).

The sequence is that of Developmental gene 1062 protein (DG1062) from Dictyostelium discoideum (Social amoeba).